Consider the following 374-residue polypeptide: Ribosomal RNA large subunit methyltransferase G (374 aa).

This sequence belongs to the methyltransferase superfamily. RlmG family.

The protein resides in the cytoplasm. It catalyses the reaction guanosine(1835) in 23S rRNA + S-adenosyl-L-methionine = N(2)-methylguanosine(1835) in 23S rRNA + S-adenosyl-L-homocysteine + H(+). Functionally, specifically methylates the guanine in position 1835 (m2G1835) of 23S rRNA. The sequence is that of Ribosomal RNA large subunit methyltransferase G from Pseudomonas fluorescens (strain ATCC BAA-477 / NRRL B-23932 / Pf-5).